The following is a 200-amino-acid chain: Crossover junction endodeoxyribonuclease RuvC (200 aa).

Residues aspartate 18, glutamate 78, and aspartate 151 contribute to the active site. Mg(2+) is bound by residues aspartate 18, glutamate 78, and aspartate 151.

This sequence belongs to the RuvC family. As to quaternary structure, homodimer which binds Holliday junction (HJ) DNA. The HJ becomes 2-fold symmetrical on binding to RuvC with unstacked arms; it has a different conformation from HJ DNA in complex with RuvA. In the full resolvosome a probable DNA-RuvA(4)-RuvB(12)-RuvC(2) complex forms which resolves the HJ. Mg(2+) serves as cofactor.

It localises to the cytoplasm. The catalysed reaction is Endonucleolytic cleavage at a junction such as a reciprocal single-stranded crossover between two homologous DNA duplexes (Holliday junction).. The RuvA-RuvB-RuvC complex processes Holliday junction (HJ) DNA during genetic recombination and DNA repair. Endonuclease that resolves HJ intermediates. Cleaves cruciform DNA by making single-stranded nicks across the HJ at symmetrical positions within the homologous arms, yielding a 5'-phosphate and a 3'-hydroxyl group; requires a central core of homology in the junction. The consensus cleavage sequence is 5'-(A/T)TT(C/G)-3'. Cleavage occurs on the 3'-side of the TT dinucleotide at the point of strand exchange. HJ branch migration catalyzed by RuvA-RuvB allows RuvC to scan DNA until it finds its consensus sequence, where it cleaves and resolves the cruciform DNA. In Cytophaga hutchinsonii (strain ATCC 33406 / DSM 1761 / CIP 103989 / NBRC 15051 / NCIMB 9469 / D465), this protein is Crossover junction endodeoxyribonuclease RuvC.